The following is a 354-amino-acid chain: Ion-translocating oxidoreductase complex subunit D (354 aa).

The next 4 helical transmembrane spans lie at 19 to 39, 40 to 60, 77 to 99, and 119 to 139; these read IMLLVFCAAVPGICTEIYYFG, FGVLFQILLSVFFSVSFEFLV, AAVTGVLIGISLPSLSPWWLSFF, and IFNPAMTGYSILLVSFPILMT. Thr-187 carries the post-translational modification FMN phosphoryl threonine. 5 consecutive transmembrane segments (helical) span residues 221–241, 245–265, 268–288, 295–315, and 319–339; these read WISINISFLIGGIVLLGFNVI, IPVSILFSLYVFFALDYYFFK, MYYPIMQLFFGSTMFSVFFIA, SITKIGRIVFGCIVGFLIWLI, and GNYPDAIAFSILLSNSIVPLI.

The protein belongs to the NqrB/RnfD family. As to quaternary structure, the complex is composed of six subunits: RnfA, RnfB, RnfC, RnfD, RnfE and RnfG. FMN serves as cofactor.

The protein localises to the cell inner membrane. Its function is as follows. Part of a membrane-bound complex that couples electron transfer with translocation of ions across the membrane. This chain is Ion-translocating oxidoreductase complex subunit D, found in Buchnera aphidicola subsp. Baizongia pistaciae (strain Bp).